A 289-amino-acid chain; its full sequence is Tumor necrosis factor receptor superfamily member 5 (289 aa).

Positions 1–19 are cleaved as a signal peptide; the sequence is MVSLPRLCALWGCLLTAVH. The Extracellular segment spans residues 20–193; it reads LGQCVTCSDK…VICGLKSRMR (174 aa). TNFR-Cys repeat units follow at residues 25 to 60, 61 to 103, 104 to 144, and 145 to 187; these read TCSD…TQCH, PCDS…DTVC, TCKE…TVCH, and PCPV…VICG. Disulfide bonds link cysteine 26–cysteine 37, cysteine 38–cysteine 51, cysteine 41–cysteine 59, cysteine 62–cysteine 77, cysteine 83–cysteine 103, cysteine 105–cysteine 119, cysteine 111–cysteine 116, and cysteine 125–cysteine 143. The N-linked (GlcNAc...) asparagine glycan is linked to asparagine 153. A helical transmembrane segment spans residues 194 to 215; sequence ALLVIPVVMGILITIFGVFLYI. Topologically, residues 216-289 are cytoplasmic; the sequence is KKVVKKPKDN…TDSIALRPLV (74 aa). Residues 228-251 form a disordered region; that stretch reads LPPAARRQDPQEMEDYPGHNTAAP.

Monomer and homodimer. Interacts with TRAF1, TRAF2 and TRAF6. Interacts with TRAF3 and TRAF5. Interacts with TRAF6 and MAP3K8; the interaction is required for ERK activation.

It is found in the cell membrane. It localises to the secreted. Its function is as follows. Receptor for TNFSF5/CD40LG. Transduces TRAF6- and MAP3K8-mediated signals that activate ERK in macrophages and B cells, leading to induction of immunoglobulin secretion. This Mus musculus (Mouse) protein is Tumor necrosis factor receptor superfamily member 5 (Cd40).